A 61-amino-acid polypeptide reads, in one-letter code: Small ribosomal subunit protein uS14 (61 aa).

Positions 24, 27, 40, and 43 each coordinate Zn(2+).

Belongs to the universal ribosomal protein uS14 family. Zinc-binding uS14 subfamily. As to quaternary structure, part of the 30S ribosomal subunit. Contacts proteins S3 and S10. Requires Zn(2+) as cofactor.

In terms of biological role, binds 16S rRNA, required for the assembly of 30S particles and may also be responsible for determining the conformation of the 16S rRNA at the A site. This is Small ribosomal subunit protein uS14 from Desulfosudis oleivorans (strain DSM 6200 / JCM 39069 / Hxd3) (Desulfococcus oleovorans).